Here is a 357-residue protein sequence, read N- to C-terminus: DNA replication and repair protein RecF (357 aa).

31-38 serves as a coordination point for ATP; it reads GQNGAGKT.

The protein belongs to the RecF family.

Its subcellular location is the cytoplasm. The RecF protein is involved in DNA metabolism; it is required for DNA replication and normal SOS inducibility. RecF binds preferentially to single-stranded, linear DNA. It also seems to bind ATP. The protein is DNA replication and repair protein RecF of Coxiella burnetii (strain CbuK_Q154) (Coxiella burnetii (strain Q154)).